A 447-amino-acid polypeptide reads, in one-letter code: tRNA modification GTPase MnmE (447 aa).

3 residues coordinate (6S)-5-formyl-5,6,7,8-tetrahydrofolate: Arg-24, Glu-81, and Lys-120. Positions 216-371 constitute a TrmE-type G domain; the sequence is GLNVVIAGKP…LRKELSDIAG (156 aa). Asn-226 contacts K(+). GTP is bound by residues 226-231, 245-251, and 270-273; these read NAGKSS, TDIAGTT, and DTAG. Residue Ser-230 coordinates Mg(2+). Residues Thr-245, Ile-247, and Thr-250 each contribute to the K(+) site. Residue Thr-251 coordinates Mg(2+). Residue Lys-447 participates in (6S)-5-formyl-5,6,7,8-tetrahydrofolate binding.

Belongs to the TRAFAC class TrmE-Era-EngA-EngB-Septin-like GTPase superfamily. TrmE GTPase family. In terms of assembly, homodimer. Heterotetramer of two MnmE and two MnmG subunits. It depends on K(+) as a cofactor.

It localises to the cytoplasm. In terms of biological role, exhibits a very high intrinsic GTPase hydrolysis rate. Involved in the addition of a carboxymethylaminomethyl (cmnm) group at the wobble position (U34) of certain tRNAs, forming tRNA-cmnm(5)s(2)U34. The protein is tRNA modification GTPase MnmE of Ruthia magnifica subsp. Calyptogena magnifica.